We begin with the raw amino-acid sequence, 784 residues long: Ent-kaurene synthase 1, chloroplastic (784 aa).

The transit peptide at 1–28 (MNLSLCIASPLLTKSSRPTALSAIHTAS) directs the protein to the chloroplast. Positions 528, 532, 672, and 680 each coordinate Mg(2+). A DDXXD motif motif is present at residues 528–532 (DDFFD).

It belongs to the terpene synthase family. Mg(2+) is required as a cofactor. As to expression, accumulates in leaves.

The protein localises to the plastid. It localises to the chloroplast. The enzyme catalyses ent-copalyl diphosphate = ent-kaur-16-ene + diphosphate. Its pathway is secondary metabolite biosynthesis; terpenoid biosynthesis. The protein operates within plant hormone biosynthesis; gibberellin biosynthesis. In terms of biological role, involved in the biosynthesis of ent-kaurene diterpenoids natural products such as oridonin, miltiradiene, eriocalyxin B and nezukol, known to exhibit antitumor, anti-inflammatory and antibacterial activities, and in the production of gibberellins phytohormones. Catalyzes the conversion of ent-copalyl diphosphate (ent-CPP) to ent-kaurene. The protein is Ent-kaurene synthase 1, chloroplastic of Stevia rebaudiana (Stevia).